Reading from the N-terminus, the 321-residue chain is Glutamyl-Q tRNA(Asp) synthetase (321 aa).

L-glutamate is bound by residues 25–29 (RFAPS) and Glu-61. Residues 28–38 (PSPSGDLHFGS) carry the 'HIGH' region motif. Cys-117, Cys-119, Tyr-131, and Cys-135 together coordinate Zn(2+). Tyr-188 and Arg-206 together coordinate L-glutamate. A 'KMSKS' region motif is present at residues 244 to 248 (KLSKQ). Lys-247 provides a ligand contact to ATP.

It belongs to the class-I aminoacyl-tRNA synthetase family. GluQ subfamily. It depends on Zn(2+) as a cofactor.

In terms of biological role, catalyzes the tRNA-independent activation of glutamate in presence of ATP and the subsequent transfer of glutamate onto a tRNA(Asp). Glutamate is transferred on the 2-amino-5-(4,5-dihydroxy-2-cyclopenten-1-yl) moiety of the queuosine in the wobble position of the QUC anticodon. In Yersinia pestis, this protein is Glutamyl-Q tRNA(Asp) synthetase.